A 455-amino-acid chain; its full sequence is Ribosomal protein uS12 methylthiotransferase RimO (455 aa).

Residues 10 to 120 (PKVGMVSLGC…VVEAVHDAAP (111 aa)) form the MTTase N-terminal domain. [4Fe-4S] cluster contacts are provided by cysteine 19, cysteine 55, cysteine 84, cysteine 151, cysteine 155, and cysteine 158. Residues 137–380 (LTPRHYSYLK…MAKTAAISAA (244 aa)) form the Radical SAM core domain. The 73-residue stretch at 383 to 455 (EAKIGRTLPV…DEHDLFGVVT (73 aa)) folds into the TRAM domain.

The protein belongs to the methylthiotransferase family. RimO subfamily. The cofactor is [4Fe-4S] cluster.

It is found in the cytoplasm. It catalyses the reaction L-aspartate(89)-[ribosomal protein uS12]-hydrogen + (sulfur carrier)-SH + AH2 + 2 S-adenosyl-L-methionine = 3-methylsulfanyl-L-aspartate(89)-[ribosomal protein uS12]-hydrogen + (sulfur carrier)-H + 5'-deoxyadenosine + L-methionine + A + S-adenosyl-L-homocysteine + 2 H(+). In terms of biological role, catalyzes the methylthiolation of an aspartic acid residue of ribosomal protein uS12. The protein is Ribosomal protein uS12 methylthiotransferase RimO of Sphingopyxis alaskensis (strain DSM 13593 / LMG 18877 / RB2256) (Sphingomonas alaskensis).